The sequence spans 138 residues: Probable phospholipase A2 homolog 1 (138 aa).

The first 21 residues, 1 to 21 (MPPRSPLLALVFLAAGVLSSA), serve as a signal peptide directing secretion. Cystine bridges form between C29-C56, C33-C62, C38-C109, C49-C69, C68-C93, and C75-C86. Residues Y48, G50, and W53 each contribute to the Ca(2+) site. H72 is a catalytic residue. D73 is a Ca(2+) binding site.

This sequence belongs to the phospholipase A2 family. Ca(2+) serves as cofactor.

The protein resides in the secreted. It carries out the reaction a 1,2-diacyl-sn-glycero-3-phosphocholine + H2O = a 1-acyl-sn-glycero-3-phosphocholine + a fatty acid + H(+). In terms of biological role, PA2 catalyzes the calcium-dependent hydrolysis of the 2-acyl groups in 3-sn-phosphoglycerides. Releases lysophospholipids (LPLs) and free fatty acids (FFAs) from membrane phospholipids in response to hormones and other external stimuli. The polypeptide is Probable phospholipase A2 homolog 1 (PLA2-I) (Oryza sativa subsp. japonica (Rice)).